Here is a 202-residue protein sequence, read N- to C-terminus: Nucleoside triphosphate pyrophosphatase (202 aa).

Asp79 serves as the catalytic Proton acceptor.

It belongs to the Maf family. A divalent metal cation serves as cofactor.

It localises to the cytoplasm. It carries out the reaction a ribonucleoside 5'-triphosphate + H2O = a ribonucleoside 5'-phosphate + diphosphate + H(+). The enzyme catalyses a 2'-deoxyribonucleoside 5'-triphosphate + H2O = a 2'-deoxyribonucleoside 5'-phosphate + diphosphate + H(+). Nucleoside triphosphate pyrophosphatase. May have a dual role in cell division arrest and in preventing the incorporation of modified nucleotides into cellular nucleic acids. The sequence is that of Nucleoside triphosphate pyrophosphatase from Rhodopseudomonas palustris (strain ATCC BAA-98 / CGA009).